The sequence spans 670 residues: E3 ubiquitin-protein ligase MAG2 (670 aa).

Disordered stretches follow at residues M1–R84 and E124–H145. A compositionally biased stretch (polar residues) spans D20–N39. Residues S51–R66 show a composition bias toward basic and acidic residues. The RING-type zinc finger occupies C195 to G250. Residues T609–G670 are disordered. Over residues E610 to Q622 the composition is skewed to basic and acidic residues. Low complexity predominate over residues V637–G649.

It belongs to the RNF10 family.

The protein localises to the cytoplasm. It catalyses the reaction S-ubiquitinyl-[E2 ubiquitin-conjugating enzyme]-L-cysteine + [acceptor protein]-L-lysine = [E2 ubiquitin-conjugating enzyme]-L-cysteine + N(6)-ubiquitinyl-[acceptor protein]-L-lysine.. Its pathway is protein modification; protein ubiquitination. Functionally, E3 ubiquitin-protein ligase involved in the degradation of non-functional 18S rRNAs in response to stalled ribosomes. Catalyzes monoubiquitination of RPS3/uS3 in response to stalled ribosomes, initiating a HEL2-dependent response that activates the degradation of non-functional 18S rRNAs. In Saccharomyces cerevisiae (strain ATCC 204508 / S288c) (Baker's yeast), this protein is E3 ubiquitin-protein ligase MAG2.